The sequence spans 1141 residues: Serine-aspartate repeat-containing protein E (1141 aa).

The signal sequence occupies residues 1–52 (MINRDNKKAITKKGMISNRLNKFSIRKYTVGTASILVGTTLIFGLGNQEAKA). The short motif at 23–34 (FSIRKYTVGTAS) is the YSIRK-G/S signaling motif element. The interval 53–601 (AENTSTENAK…GDGTVKPEEK (549 aa)) is ligand binding A region. Residues 54–248 (ENTSTENAKQ…RSTKPVATAP (195 aa)) are disordered. The segment covering 61–75 (AKQDDATTSDNKEVV) has biased composition (basic and acidic residues). Positions 77–90 (ETENNSTTENDSTN) are enriched in low complexity. Basic and acidic residues predominate over residues 92–108 (IKKETNTDSQPEAKEES). The span at 109-126 (TTSSTQQQQNNVTATTET) shows a compositional bias: low complexity. A compositionally biased stretch (basic and acidic residues) spans 130–145 (NIEKENVKPSTDKTAT). Residues 159 to 207 (NYTNNDVTTKPSTSEIQTKPTTPQESTNIENSQPQPTPSKVDNQVTDAT) show a composition bias toward polar residues. Basic and acidic residues predominate over residues 216 to 241 (SKEELKNNPEKLKELVRNDNNTDRST). CNA-B domains lie at 602 to 714 (LYKI…YKEP), 715 to 824 (KYNL…YKTP), and 825 to 935 (KYSL…EEDT). The tract at residues 929-1117 (GYFEEDTSDS…GSENNGSNNA (189 aa)) is disordered. Acidic residues predominate over residues 930–1080 (YFEEDTSDSD…DSDSDSDSDS (151 aa)). An LPXTG sorting signal motif is present at residues 1104-1108 (LPETG). Position 1107 is a pentaglycyl murein peptidoglycan amidated threonine (threonine 1107). Residues 1108 to 1141 (GSENNGSNNATLFGGLFAALGSLLLFGRRKKQNK) constitute a propeptide, removed by sortase.

The protein belongs to the serine-aspartate repeat-containing protein (SDr) family. In terms of assembly, interacts with host complement factor H/CFAH (via C-terminus). Interacts with host complement regulator C4BPA.

Its subcellular location is the secreted. It is found in the cell wall. In terms of biological role, cell surface-associated calcium-binding protein which plays an important role in adhesion and pathogenesis. Contributes to the resistance to killing by innate immune components in blood and thus attenuates bacterial clearance by interacting with host complement factor H/CFAH and modulating its activity. Inhibits also bacterial opsonization and killing by interacting with host complement regulator C4BPA and thus inhibiting classical complement pathway activation. This is Serine-aspartate repeat-containing protein E (sdrE) from Staphylococcus aureus (strain Mu50 / ATCC 700699).